Consider the following 463-residue polypeptide: Chromosomal replication initiator protein DnaA (463 aa).

The tract at residues 1–84 is domain I, interacts with DnaA modulators; the sequence is MNTNQIILTN…QLFQHYNNAI (84 aa). The segment at 84–124 is domain II; it reads IKTVEIITKELPASNQATLELPTKTFADIGSSELNSENIFS. The interval 125 to 343 is domain III, AAA+ region; the sequence is TFDIRFTFDN…GALNKVIAHS (219 aa). Residues Gly-171, Gly-173, Lys-174, and Thr-175 each contribute to the ATP site. Residues 344–463 form a domain IV, binds dsDNA region; that stretch reads NFTAKEITLE…INLMMKILQN (120 aa).

Belongs to the DnaA family. In terms of assembly, oligomerizes as a right-handed, spiral filament on DNA at oriC.

Its subcellular location is the cytoplasm. In terms of biological role, plays an essential role in the initiation and regulation of chromosomal replication. ATP-DnaA binds to the origin of replication (oriC) to initiate formation of the DNA replication initiation complex once per cell cycle. Binds the DnaA box (a 9 base pair repeat at the origin) and separates the double-stranded (ds)DNA. Forms a right-handed helical filament on oriC DNA; dsDNA binds to the exterior of the filament while single-stranded (ss)DNA is stabiized in the filament's interior. The ATP-DnaA-oriC complex binds and stabilizes one strand of the AT-rich DNA unwinding element (DUE), permitting loading of DNA polymerase. After initiation quickly degrades to an ADP-DnaA complex that is not apt for DNA replication. Binds acidic phospholipids. This chain is Chromosomal replication initiator protein DnaA, found in Rickettsia bellii (strain RML369-C).